Reading from the N-terminus, the 491-residue chain is Ketol-acid reductoisomerase (NADP(+)) (491 aa).

Residues alanine 15–serine 208 enclose the KARI N-terminal Rossmann domain. NADP(+) is bound by residues cysteine 45–glutamine 48, arginine 68, arginine 76, serine 78, and aspartate 108–glutamine 110. The active site involves histidine 132. An NADP(+)-binding site is contributed by glycine 158. 2 KARI C-terminal knotted domains span residues serine 209–glutamine 344 and tyrosine 345–methionine 484. Mg(2+) is bound by residues aspartate 217, glutamate 221, glutamate 389, and glutamate 393. Serine 414 contacts substrate.

Belongs to the ketol-acid reductoisomerase family. Requires Mg(2+) as cofactor.

It carries out the reaction (2R)-2,3-dihydroxy-3-methylbutanoate + NADP(+) = (2S)-2-acetolactate + NADPH + H(+). The enzyme catalyses (2R,3R)-2,3-dihydroxy-3-methylpentanoate + NADP(+) = (S)-2-ethyl-2-hydroxy-3-oxobutanoate + NADPH + H(+). The protein operates within amino-acid biosynthesis; L-isoleucine biosynthesis; L-isoleucine from 2-oxobutanoate: step 2/4. Its pathway is amino-acid biosynthesis; L-valine biosynthesis; L-valine from pyruvate: step 2/4. Functionally, involved in the biosynthesis of branched-chain amino acids (BCAA). Catalyzes an alkyl-migration followed by a ketol-acid reduction of (S)-2-acetolactate (S2AL) to yield (R)-2,3-dihydroxy-isovalerate. In the isomerase reaction, S2AL is rearranged via a Mg-dependent methyl migration to produce 3-hydroxy-3-methyl-2-ketobutyrate (HMKB). In the reductase reaction, this 2-ketoacid undergoes a metal-dependent reduction by NADPH to yield (R)-2,3-dihydroxy-isovalerate. In Escherichia coli (strain ATCC 8739 / DSM 1576 / NBRC 3972 / NCIMB 8545 / WDCM 00012 / Crooks), this protein is Ketol-acid reductoisomerase (NADP(+)).